We begin with the raw amino-acid sequence, 184 residues long: Adenine phosphoribosyltransferase (184 aa).

It belongs to the purine/pyrimidine phosphoribosyltransferase family. Homodimer.

It localises to the cytoplasm. The catalysed reaction is AMP + diphosphate = 5-phospho-alpha-D-ribose 1-diphosphate + adenine. The protein operates within purine metabolism; AMP biosynthesis via salvage pathway; AMP from adenine: step 1/1. Its function is as follows. Catalyzes a salvage reaction resulting in the formation of AMP, that is energically less costly than de novo synthesis. This Mycobacterium marinum (strain ATCC BAA-535 / M) protein is Adenine phosphoribosyltransferase.